Reading from the N-terminus, the 138-residue chain is Small ribosomal subunit protein uS11 (138 aa).

The protein belongs to the universal ribosomal protein uS11 family. Part of the 30S ribosomal subunit.

Functionally, located on the platform of the 30S subunit. The protein is Small ribosomal subunit protein uS11 of Pyrobaculum arsenaticum (strain DSM 13514 / JCM 11321 / PZ6).